The sequence spans 256 residues: 5-keto-4-deoxy-D-glucarate aldolase (256 aa).

Residue His50 is the Proton acceptor of the active site. Residue Gln151 participates in substrate binding. Glu153 serves as a coordination point for Mg(2+). Residues Ser178 and Asp179 each contribute to the substrate site. Asp179 serves as a coordination point for Mg(2+).

Belongs to the HpcH/HpaI aldolase family. KDGluc aldolase subfamily. In terms of assembly, homohexamer; trimer of dimers. Mg(2+) serves as cofactor.

The enzyme catalyses 5-dehydro-4-deoxy-D-glucarate = 2-hydroxy-3-oxopropanoate + pyruvate. It catalyses the reaction 2-dehydro-3-deoxy-D-glucarate = 2-hydroxy-3-oxopropanoate + pyruvate. The protein operates within carbohydrate acid metabolism; galactarate degradation; D-glycerate from galactarate: step 2/3. Functionally, catalyzes the reversible retro-aldol cleavage of both 5-keto-4-deoxy-D-glucarate and 2-keto-3-deoxy-D-glucarate to pyruvate and tartronic semialdehyde. The protein is 5-keto-4-deoxy-D-glucarate aldolase of Escherichia coli (strain K12 / DH10B).